The primary structure comprises 168 residues: Gastrula zinc finger protein XlCGF7.1 (168 aa).

6 C2H2-type zinc fingers span residues 6–28, 34–56, 62–84, 90–112, 118–140, and 146–168; these read FTCT…QRTH, FTCT…LKCH, FMCT…RKIH, YICT…QTVH, FTCS…QKIH, and FKCN…ERIH.

Belongs to the krueppel C2H2-type zinc-finger protein family.

It localises to the nucleus. May be involved in transcriptional regulation. The sequence is that of Gastrula zinc finger protein XlCGF7.1 from Xenopus laevis (African clawed frog).